Reading from the N-terminus, the 470-residue chain is MTELPDNTRWQLWIVAFGFFMQSLDTTIVNTALPSMAKSLGESPLHMHMVVVSYVLTVAVMLPASGWLADKIGVRNIFFAAIVLFTLGSLFCALSGTLNQLVLARVLQGVGGAMMVPVGRLTVMKIVPRTQYMAAMTFVTLPGQIGPLLGPALGGVLVEYASWHWIFLINIPVGIVGAMATFMLMPNYTIETRRFDLPGFLLLAIGMAVLTLALDGSKSMGISPWTLAGLAAGGAAAILLYLFHAKKNSGALFSLRLFRTPTFSLGLLGSFAGRIGSGMLPFMTPVFLQIGLGFSPFHAGLMMIPMVLGSMGMKRIVVQIVNRFGYRRVLVATTLGLALVSLLFMSVALLGWYYLLPLVLLLQGMVNSARFSSMNTLTLKDLPDTLASSGNSLLSMIMQLSMSIGVTIAGMLLGMFGQQHIGIDSSATHHVFMYTWLCMAVIIALPAIIFARVPNDTQQNMVISRRKRSL.

Residues 1 to 11 (MTELPDNTRWQ) are Periplasmic-facing. The helical transmembrane segment at 12 to 32 (LWIVAFGFFMQSLDTTIVNTA) threads the bilayer. At 33 to 48 (LPSMAKSLGESPLHMH) the chain is on the cytoplasmic side. A helical transmembrane segment spans residues 49–69 (MVVVSYVLTVAVMLPASGWLA). The Periplasmic portion of the chain corresponds to 70-76 (DKIGVRN). The helical transmembrane segment at 77–97 (IFFAAIVLFTLGSLFCALSGT) threads the bilayer. Over 98–101 (LNQL) the chain is Cytoplasmic. Residues 102-124 (VLARVLQGVGGAMMVPVGRLTVM) form a helical membrane-spanning segment. Over 125–137 (KIVPRTQYMAAMT) the chain is Periplasmic. The chain crosses the membrane as a helical span at residues 138 to 158 (FVTLPGQIGPLLGPALGGVLV). Residues 159–164 (EYASWH) lie on the Cytoplasmic side of the membrane. The chain crosses the membrane as a helical span at residues 165 to 185 (WIFLINIPVGIVGAMATFMLM). Over 186–196 (PNYTIETRRFD) the chain is Periplasmic. The chain crosses the membrane as a helical span at residues 197–217 (LPGFLLLAIGMAVLTLALDGS). The Cytoplasmic segment spans residues 218–224 (KSMGISP). A helical transmembrane segment spans residues 225–245 (WTLAGLAAGGAAAILLYLFHA). Residues 246–262 (KKNSGALFSLRLFRTPT) are Periplasmic-facing. The chain crosses the membrane as a helical span at residues 263–283 (FSLGLLGSFAGRIGSGMLPFM). At 284 to 285 (TP) the chain is on the cytoplasmic side. A helical membrane pass occupies residues 286–306 (VFLQIGLGFSPFHAGLMMIPM). Residues 307–341 (VLGSMGMKRIVVQIVNRFGYRRVLVATTLGLALVS) are Periplasmic-facing. Residues 342–362 (LLFMSVALLGWYYLLPLVLLL) form a helical membrane-spanning segment. Residues 363-395 (QGMVNSARFSSMNTLTLKDLPDTLASSGNSLLS) lie on the Cytoplasmic side of the membrane. Residues 396-416 (MIMQLSMSIGVTIAGMLLGMF) traverse the membrane as a helical segment. Residues 417–430 (GQQHIGIDSSATHH) lie on the Periplasmic side of the membrane. A helical membrane pass occupies residues 431 to 451 (VFMYTWLCMAVIIALPAIIFA). Over 452-470 (RVPNDTQQNMVISRRKRSL) the chain is Cytoplasmic.

It belongs to the major facilitator superfamily. TCR/Tet family.

Its subcellular location is the cell inner membrane. In Salmonella dublin (strain CT_02021853), this protein is Putative multidrug resistance protein MdtD.